The following is a 238-amino-acid chain: Ciliary microtubule associated protein 1B (238 aa).

One copy of the STPGR repeat lies at 182–207 (PGPCAYHVVNPMIYKTRAPQFTMLGR). A disordered region spans residues 206-238 (GRTLPPRENTKKPGPASYSVDKVVWSRGSRGRG).

This sequence belongs to the CIMAP family.

The protein resides in the cell projection. It is found in the cilium. Its subcellular location is the flagellum. This is Ciliary microtubule associated protein 1B (Cimap1b) from Mus musculus (Mouse).